A 699-amino-acid chain; its full sequence is Polyribonucleotide nucleotidyltransferase (699 aa).

Mg(2+) is bound by residues aspartate 484 and aspartate 490. Residues 551–610 enclose the KH domain; sequence PRITTIQVKPDQVRTVIGPGGKNVRGIIEATGCAIDIEDDGRINIASADGDACKAAIKMI. The S1 motif domain maps to 620-688; the sequence is GKLYMATVKK…RQGKIKLSRK (69 aa).

Belongs to the polyribonucleotide nucleotidyltransferase family. Mg(2+) is required as a cofactor.

The protein resides in the cytoplasm. The enzyme catalyses RNA(n+1) + phosphate = RNA(n) + a ribonucleoside 5'-diphosphate. Functionally, involved in mRNA degradation. Catalyzes the phosphorolysis of single-stranded polyribonucleotides processively in the 3'- to 5'-direction. The polypeptide is Polyribonucleotide nucleotidyltransferase (Syntrophotalea carbinolica (strain DSM 2380 / NBRC 103641 / GraBd1) (Pelobacter carbinolicus)).